The primary structure comprises 140 residues: Probable transport accessory protein MmpS4 (140 aa).

A helical transmembrane segment spans residues 2-22 (LMRTWIPLVILVVVIVGGFTV).

Belongs to the MmpS family.

The protein localises to the cell membrane. The chain is Probable transport accessory protein MmpS4 (mmpS4) from Mycobacterium bovis (strain ATCC BAA-935 / AF2122/97).